Reading from the N-terminus, the 371-residue chain is tRNA-specific 2-thiouridylase MnmA (371 aa).

Residues 13 to 20 (GMSGGVDS) and Met39 contribute to the ATP site. The interaction with target base in tRNA stretch occupies residues 99-101 (NPD). Cys104 (nucleophile) is an active-site residue. Cys104 and Cys200 are disulfide-bonded. Gly128 contacts ATP. The tract at residues 150–152 (KDQ) is interaction with tRNA. Cys200 (cysteine persulfide intermediate) is an active-site residue. The interaction with tRNA stretch occupies residues 308 to 309 (RY).

This sequence belongs to the MnmA/TRMU family.

The protein resides in the cytoplasm. It catalyses the reaction S-sulfanyl-L-cysteinyl-[protein] + uridine(34) in tRNA + AH2 + ATP = 2-thiouridine(34) in tRNA + L-cysteinyl-[protein] + A + AMP + diphosphate + H(+). In terms of biological role, catalyzes the 2-thiolation of uridine at the wobble position (U34) of tRNA, leading to the formation of s(2)U34. The polypeptide is tRNA-specific 2-thiouridylase MnmA (Bacillus cereus (strain ATCC 10987 / NRS 248)).